The sequence spans 483 residues: Leukocyte immunoglobulin-like receptor subfamily A member 2 (483 aa).

Residues 1-23 (MTPILTVLICLGLSLGPRTHVQA) form the signal peptide. At 24–449 (GHLPKPTLWA…QHPQDYTVEN (426 aa)) the chain is on the extracellular side. Ig-like C2-type domains lie at 27 to 113 (PKPT…DPLE), 117 to 222 (TGAY…GVSK), 224 to 313 (PSLS…DPLD), and 324 to 413 (PSLS…SDPL). The cysteines at positions 49 and 97 are disulfide-linked. Asn64, Asn103, and Asn138 each carry an N-linked (GlcNAc...) asparagine glycan. Disulfide bonds link Cys143–Cys195 and Cys244–Cys295. N-linked (GlcNAc...) asparagine glycans are attached at residues Asn279, Asn300, and Asn339. Residues Cys344 and Cys395 are joined by a disulfide bond. At Tyr404 the chain carries 3'-nitrotyrosine. Asn429 is a glycosylation site (N-linked (GlcNAc...) asparagine). The helical transmembrane segment at 450–470 (LIRMGVAGLVLVVLGILLFEA) threads the bilayer. Residues 471-483 (QHSQRSLQDAAGR) lie on the Cytoplasmic side of the membrane.

Homodimer. As to expression, detected on the surface of all peripheral blood monocytes, neutrophils, basophils and eosinophils (at protein level). Expression levels are very low or not detectable on monocytes, T-cells, B-cells, dendritic cells and natural killer (NK) cells.

Its subcellular location is the cell membrane. It localises to the secreted. Functionally, part of the innate immune responses against microbial infection. Specifically recognizes a set of N-terminally truncated immunoglobulins that are produced via cleavage by proteases from a range of pathogenic bacteria and fungi, including L.pneumophila, M.hyorhinis, S.pneumoniae, S.aureus and C.albicans. Recognizes epitopes that are in part in the variable region of the immunoglobulin light chains, but requires also the constant region for signaling. Binds to a subset of cleaved IgM, IgG3 and IgG4 molecules, but does not bind cleaved IgA1. Binding of N-terminally truncated immunoglobulins mediates activation of neutrophils. In monocytes, activation leads to the release of CSF2, CF3, IL6, CXCL8 and CCL3 and down-regulates responses to bacterial lipopolysaccharide (LPS), possibly via down-regulation of TLR4 expression and reduced signaling via TLR4. In eosinophils, activation by ligand binding leads to the release of RNASE2, IL4 and leukotriene C4. Does not bind class I MHC antigens. This chain is Leukocyte immunoglobulin-like receptor subfamily A member 2 (LILRA2), found in Homo sapiens (Human).